We begin with the raw amino-acid sequence, 289 residues long: Toxin tox21A (289 aa).

An N-terminal signal peptide occupies residues 1 to 14 (MNLYFLFFISTILA). Positions 15 to 27 (AKPFNSFNKTSLI) are excised as a propeptide. A disordered region spans residues 270 to 289 (DKDITVHENAGDPKSDSRRC).

In terms of processing, contains several disulfide bonds. Posterior glands which appear to be connected with the stylet through a series of ducts.

It is found in the secreted. Functionally, has contracting-paralyzing activity in insect larvae. The sequence is that of Toxin tox21A from Pyemotes tritici (Straw itch mite).